The following is a 206-amino-acid chain: Dehydration-responsive element-binding protein 2D (206 aa).

A disordered region spans residues 13–40 (ANKKQRTVQASSRKGCMRGKGGPDNASC). A DNA-binding region (AP2/ERF) is located at residues 41–98 (TYKGVRQRTWGKWVAEIREPNRGARLWLGTFDTSREAALAYDSAARKLYGPEAHLNLP). Residues 102–139 (RSYPKTASSPASQTTPSSNTGGKSSSDSESPCSSNEMS) form a disordered region. The segment covering 107–139 (TASSPASQTTPSSNTGGKSSSDSESPCSSNEMS) has biased composition (low complexity).

The protein belongs to the AP2/ERF transcription factor family. ERF subfamily.

Its subcellular location is the nucleus. Putative transcriptional activator that binds specifically to the DNA sequence 5'-[AG]CCGAC-3'. Binding to the C-repeat/DRE element mediates high salinity-inducible transcription. This chain is Dehydration-responsive element-binding protein 2D (DREB2D), found in Arabidopsis thaliana (Mouse-ear cress).